A 355-amino-acid chain; its full sequence is D-alanine--D-alanine ligase (355 aa).

The ATP-grasp domain maps to 143–350 (KTIFSNLKIP…IEQLVAKLVD (208 aa)). 178-233 (IKKLNFPVFVKPSNSGSSLGISKVINKSALLKALEKAWEIDARILVEEGLETREIE) provides a ligand contact to ATP. The Mg(2+) site is built by aspartate 303, glutamate 317, and asparagine 319.

Belongs to the D-alanine--D-alanine ligase family. It depends on Mg(2+) as a cofactor. Mn(2+) is required as a cofactor.

Its subcellular location is the cytoplasm. The catalysed reaction is 2 D-alanine + ATP = D-alanyl-D-alanine + ADP + phosphate + H(+). The protein operates within cell wall biogenesis; peptidoglycan biosynthesis. Its function is as follows. Cell wall formation. In Prochlorococcus marinus (strain MIT 9312), this protein is D-alanine--D-alanine ligase.